The sequence spans 1477 residues: Lysine-specific demethylase rbr-2 (1477 aa).

The tract at residues 1 to 37 (MRARRQENSISTPSAPSTSTSPRKKASIGNSRSKNHG) is disordered. The span at 9–21 (SISTPSAPSTSTS) shows a compositional bias: low complexity. In terms of domain architecture, JmjN spans 56 to 97 (APIYYPTEEEFSDPIEYVAKIRHEAEKFGVVKIVPPANFKPP). Residues 121 to 218 (VKEKHTFIDR…HIEPFNRNLK (98 aa)) form the ARID domain. Residues 222-314 (MKNDDESDDE…KAEGDDDDDE (93 aa)) are disordered. Basic and acidic residues predominate over residues 246 to 259 (MRTEIEVPNDKTTE). 2 stretches are compositionally biased toward basic residues: residues 272-283 (GRRRSKNKKASS) and 295-304 (NSTRGRKNKK). The segment at 319 to 371 (QVFCVACNEGKDEDLLLLCDIDGCNNGRHTYCCDPVLDEVPEGEWRCPKCIES) adopts a PHD-type 1 zinc-finger fold. The JmjC domain occupies 468–634 (QYASHAWNLN…KGRECVESYS (167 aa)). His-514, Asp-517, and His-602 together coordinate Fe cation. A coiled-coil region spans residues 874 to 926 (IIDKLEKWMEQVEMWRNRAKDAIYREQEYSKEEIEKIIEEGDEYDIKLEEIDE). The PHD-type 2 zinc finger occupies 1203–1257 (LEACSCLGFNKSDDSESTLTCIMCDSEFHVRCCEWSPFLEKLPEGCFLCVRCLRG). The disordered stretch occupies residues 1375-1404 (TAKRKRPSVSHKETSKKSRKRQSQASPSEY). Residues 1411–1466 (FKSCQARACLKPYGDSVNWVMCEAGCKNWFHVICLGFTLREINDMHEYRCSSCLDH) form a PHD-type 3 zinc finger.

Belongs to the JARID1 histone demethylase family. Requires Fe(2+) as cofactor.

The protein resides in the nucleus. The enzyme catalyses N(6),N(6),N(6)-trimethyl-L-lysyl(4)-[histone H3] + 3 2-oxoglutarate + 3 O2 = L-lysyl(4)-[histone H3] + 3 formaldehyde + 3 succinate + 3 CO2. Its function is as follows. Histone demethylase that specifically demethylates 'Lys-4' of histone H3, thereby playing a central role in histone code. Does not demethylate histone H3 'Lys-9', H3 'Lys-27', H3 'Lys-36', H3 'Lys-79' or H4 'Lys-20'. Demethylates trimethylated and dimethylated but not monomethylated H3 'Lys-4'. Required for normal longevity of the soma in a germline-dependent manner. Implicated in the epigenetic inheritance of lifespan over several generations. Involved in larval development and vulva formation. The polypeptide is Lysine-specific demethylase rbr-2 (rbr-2) (Caenorhabditis elegans).